Reading from the N-terminus, the 275-residue chain is Phosphonoacetaldehyde hydrolase (275 aa).

The Nucleophile role is filled by Asp15. Mg(2+) contacts are provided by Asp15 and Ala17. The active-site Schiff-base intermediate with substrate is Lys56. Asp189 contacts Mg(2+).

It belongs to the HAD-like hydrolase superfamily. PhnX family. As to quaternary structure, homodimer. It depends on Mg(2+) as a cofactor.

It catalyses the reaction phosphonoacetaldehyde + H2O = acetaldehyde + phosphate + H(+). Functionally, involved in phosphonate degradation. The protein is Phosphonoacetaldehyde hydrolase of Pseudomonas putida (strain W619).